We begin with the raw amino-acid sequence, 912 residues long: Metabotropic glutamate receptor 4 (912 aa).

The first 32 residues, 1 to 32 (MSGKGGWAWWWARLPLCLLLSLYGSWVPSSLG), serve as a signal peptide directing secretion. At 33-586 (KPKGHPHMNS…PIVKLEWDSP (554 aa)) the chain is on the extracellular side. An intrachain disulfide couples Cys67 to Cys109. N-linked (GlcNAc...) asparagine glycosylation is present at Asn98. Residues Ser159, 180–182 (AST), and Tyr230 each bind L-glutamate. Disulfide bonds link Cys249/Cys538, Cys372/Cys388, Cys428/Cys435, Cys520/Cys539, Cys524/Cys542, Cys545/Cys557, and Cys560/Cys573. Asn301 is a glycosylation site (N-linked (GlcNAc...) asparagine). Asp312 contacts L-glutamate. Lys405 provides a ligand contact to L-glutamate. The chain crosses the membrane as a helical span at residues 587 to 607 (WAVLPLFLAVVGIAATLFVVV). The Cytoplasmic segment spans residues 608-624 (TFVRYNDTPIVKASGRE). Residues 625–645 (LSYVLLAGIFLCYATTFLMIA) form a helical membrane-spanning segment. The Extracellular segment spans residues 646 to 653 (EPDLGTCS). Residues 654–671 (LRRIFLGLGMSISYAALL) traverse the membrane as a helical segment. Over 672 to 699 (TKTNRIYRIFEQGKRSVSAPRFISPASQ) the chain is Cytoplasmic. Residues 700 to 720 (LAITFVLISLQLLCICVWFVV) traverse the membrane as a helical segment. The Extracellular segment spans residues 721–751 (DPSHSVVDFQDQRTLDPRFARGVLKCDISDL). Residues 752 to 772 (SLICLLGYSMLLMVTCTVYAI) traverse the membrane as a helical segment. Residues 773 to 786 (KTRGVPETFNEAKP) are Cytoplasmic-facing. Residues 787–807 (IGFTMYTTCIVWLAFIPIFFG) traverse the membrane as a helical segment. Topologically, residues 808–826 (TSQSADKLYIQTTTLTVSV) are extracellular. The helical transmembrane segment at 827 to 847 (SLSASVSLGMLYMPKVYIILF) threads the bilayer. Topologically, residues 848 to 912 (HPEQNVPKRK…TYVTYTNHAI (65 aa)) are cytoplasmic.

Belongs to the G-protein coupled receptor 3 family. As to quaternary structure, interacts with PICK1.

The protein localises to the cell membrane. In terms of biological role, G-protein coupled receptor for glutamate. Ligand binding causes a conformation change that triggers signaling via guanine nucleotide-binding proteins (G proteins) and modulates the activity of down-stream effectors. Signaling inhibits adenylate cyclase activity. This chain is Metabotropic glutamate receptor 4 (Grm4), found in Mus musculus (Mouse).